The chain runs to 165 residues: Probable cell wall protein PGA15 (165 aa).

The N-terminal stretch at 1–16 is a signal peptide; the sequence is MKFIIILFTLISIVTA. S143 carries GPI-anchor amidated serine lipidation. The propeptide at 144 to 165 is removed in mature form; the sequence is GAANYLTSFSIGTFFVFVLGLI.

This sequence belongs to the IHD1 family. In terms of processing, the GPI-anchor is attached to the protein in the endoplasmic reticulum and serves to target the protein to the cell surface. There, the glucosamine-inositol phospholipid moiety is cleaved off and the GPI-modified mannoprotein is covalently attached via its lipidless GPI glycan remnant to the 1,6-beta-glucan of the outer cell wall layer.

The protein resides in the secreted. The protein localises to the cell wall. It localises to the membrane. Probable GPI-anchored cell wall protein that may be involved in cell wall organization, hyphal growth, as well as in virulence. This chain is Probable cell wall protein PGA15 (PGA15), found in Candida albicans (strain SC5314 / ATCC MYA-2876) (Yeast).